The following is a 349-amino-acid chain: CCN family member 2 (349 aa).

The first 26 residues, 1–26 (MTAASMGPVRVAFVVLLALCSRPAVG), serve as a signal peptide directing secretion. The 72-residue stretch at 27–98 (QNCSGPCRCP…NRKIGVCTAK (72 aa)) folds into the IGFBP N-terminal domain. A glycan (N-linked (GlcNAc...) asparagine) is linked at asparagine 28. 6 cysteine pairs are disulfide-bonded: cysteine 29-cysteine 54, cysteine 33-cysteine 56, cysteine 35-cysteine 57, cysteine 43-cysteine 60, cysteine 68-cysteine 82, and cysteine 74-cysteine 95. The VWFC domain maps to 101-167 (APCIFGGTVY…GKCCEEWVCD (67 aa)). The 46-residue stretch at 198-243 (NCLVQTTEWSACSKTCGMGISTRVTNDNASCRLEKQSRLCMVRPCE) folds into the TSP type-1 domain. N-linked (GlcNAc...) asparagine glycosylation occurs at asparagine 225. The interval 247 to 349 (EENIKKGKKC…YYRKMYGDMA (103 aa)) is heparin-binding. Intrachain disulfides connect cysteine 256–cysteine 293, cysteine 273–cysteine 307, cysteine 284–cysteine 323, cysteine 287–cysteine 325, and cysteine 292–cysteine 329. The 75-residue stretch at 256-330 (CIRTPKISKP…KTCACHYNCP (75 aa)) folds into the CTCK domain.

The protein belongs to the CCN family. In terms of assembly, monomer. Interacts with TSKU. In terms of tissue distribution, expressed in bone marrow and thymic cells. Also expressed one of two Wilms tumors tested.

It is found in the secreted. The protein resides in the extracellular space. It localises to the extracellular matrix. Major connective tissue mitoattractant secreted by vascular endothelial cells. Promotes proliferation and differentiation of chondrocytes. Is involved in the stimulation of osteoblast differentiation and has a critical role in osteogenesis. Mediates heparin- and divalent cation-dependent cell adhesion in many cell types including fibroblasts, myofibroblasts, endothelial and epithelial cells. Enhances fibroblast growth factor-induced DNA synthesis. This Homo sapiens (Human) protein is CCN family member 2.